The chain runs to 239 residues: Ribosomal RNA small subunit methyltransferase G (239 aa).

S-adenosyl-L-methionine-binding positions include glycine 77, phenylalanine 82, alanine 128–glutamate 129, and arginine 147.

It belongs to the methyltransferase superfamily. RNA methyltransferase RsmG family.

The protein localises to the cytoplasm. Specifically methylates the N7 position of guanine in position 535 of 16S rRNA. The sequence is that of Ribosomal RNA small subunit methyltransferase G from Bacillus anthracis (strain A0248).